A 115-amino-acid polypeptide reads, in one-letter code: Secreted RxLR effector protein 2 (115 aa).

The signal sequence occupies residues 1 to 22; the sequence is MICRSPLIVVMLFVIAAHTVLA. Positions 57–82 match the RxLR-dEER motif; the sequence is RFLRQETTFEKKLGVNDVHAVHAEER.

The protein belongs to the RxLR effector family.

The protein resides in the secreted. It is found in the host cytoplasm. Its subcellular location is the host nucleus. In terms of biological role, effector that acts as a broad suppressor of cell death to interrupt plant immunity. Inhibits cell death induced by cell death-inducing proteins, including the PAMP elicitor INF1 from P.infestans. This chain is Secreted RxLR effector protein 2, found in Plasmopara viticola (Downy mildew of grapevine).